The chain runs to 423 residues: Glutamate-1-semialdehyde 2,1-aminomutase (423 aa).

An N6-(pyridoxal phosphate)lysine modification is found at Lys-266.

The protein belongs to the class-III pyridoxal-phosphate-dependent aminotransferase family. HemL subfamily. As to quaternary structure, homodimer. The cofactor is pyridoxal 5'-phosphate.

The protein localises to the cytoplasm. The catalysed reaction is (S)-4-amino-5-oxopentanoate = 5-aminolevulinate. It participates in porphyrin-containing compound metabolism; protoporphyrin-IX biosynthesis; 5-aminolevulinate from L-glutamyl-tRNA(Glu): step 2/2. The chain is Glutamate-1-semialdehyde 2,1-aminomutase from Nitratidesulfovibrio vulgaris (strain ATCC 29579 / DSM 644 / CCUG 34227 / NCIMB 8303 / VKM B-1760 / Hildenborough) (Desulfovibrio vulgaris).